The chain runs to 612 residues: UvrABC system protein C (612 aa).

One can recognise a GIY-YIG domain in the interval 20–98 (THSGVYRMLD…IKQHRPKYNI (79 aa)). Residues 208–243 (SSVLEEISAKMYQASEDMEYEKAQVYRDQLVVLRKL) enclose the UVR domain.

It belongs to the UvrC family. Interacts with UvrB in an incision complex.

It localises to the cytoplasm. Functionally, the UvrABC repair system catalyzes the recognition and processing of DNA lesions. UvrC both incises the 5' and 3' sides of the lesion. The N-terminal half is responsible for the 3' incision and the C-terminal half is responsible for the 5' incision. The chain is UvrABC system protein C from Francisella tularensis subsp. tularensis (strain WY96-3418).